A 305-amino-acid polypeptide reads, in one-letter code: Glycine--tRNA ligase alpha subunit (305 aa).

Belongs to the class-II aminoacyl-tRNA synthetase family. As to quaternary structure, tetramer of two alpha and two beta subunits.

It is found in the cytoplasm. The enzyme catalyses tRNA(Gly) + glycine + ATP = glycyl-tRNA(Gly) + AMP + diphosphate. In Streptococcus pneumoniae (strain P1031), this protein is Glycine--tRNA ligase alpha subunit.